Here is a 101-residue protein sequence, read N- to C-terminus: Large ribosomal subunit protein bL27 (101 aa).

Positions 1-21 are disordered; the sequence is MAHKKAGGSSRNGRDSRSKRL.

This sequence belongs to the bacterial ribosomal protein bL27 family.

The sequence is that of Large ribosomal subunit protein bL27 from Buchnera aphidicola subsp. Cinara cedri (strain Cc).